The following is a 941-amino-acid chain: Probable respiratory burst oxidase homolog protein I (941 aa).

Residues 1-374 (MSMSFSGGTH…LYSLQDNWKR (374 aa)) lie on the Cytoplasmic side of the membrane. 2 disordered regions span residues 29–48 (PSLP…SGEE) and 103–166 (ERLT…SGTE). The span at 36–45 (SPSPSSSSSS) shows a compositional bias: low complexity. Over residues 103–117 (ERLTAGTNSKQQIQK) the composition is skewed to polar residues. EF-hand-like stretches follow at residues 196-204 (SKDGYLFKS) and 232-243 (RRIMVDKINLQE). Residues 254-289 (ESFDSRLQIFFNMVKNGDGRITENEVKEIIILSASA) enclose the EF-hand domain. Ca(2+) is bound by residues Asn-269, Asp-271, Arg-273, and Glu-278. Phosphoserine occurs at positions 346 and 350. The helical transmembrane segment at 375-395 (IWVLTLWFVIMAWLFMWKCYQ) threads the bilayer. Residues 396–407 (YKHKDAFHVMGY) lie on the Extracellular side of the membrane. Residues 408–428 (CLVMAKGAAETLKFNMALILL) form a helical membrane-spanning segment. The region spanning 413 to 570 (KGAAETLKFN…LLLTVYVLLV (158 aa)) is the Ferric oxidoreductase domain. The Cytoplasmic segment spans residues 429–514 (PVCRNTITYL…YFGLVNTPVG (86 aa)). A helical membrane pass occupies residues 515-535 (ITGIIMVAFMLIAFTLASRRC). Topologically, residues 536–557 (RRNLTKLPKPFDKLTGYNAFWY) are extracellular. A helical membrane pass occupies residues 558-578 (SHHLLLTVYVLLVIHGVSLYL). Over 579 to 586 (EHKWYRKT) the chain is Cytoplasmic. The helical transmembrane segment at 587 to 604 (VWMYLAVPVLLYVGERIF) threads the bilayer. Residues 605 to 731 (RFFRSRLYTV…PYGAPAQDHW (127 aa)) lie on the Extracellular side of the membrane. One can recognise an FAD-binding FR-type domain in the interval 609-729 (SRLYTVEICK…DGPYGAPAQD (121 aa)). Residues 732 to 752 (KYDVVLLVGLGIGATPFVSIL) form a helical membrane-spanning segment. Residues 753–941 (RDLLNNIIKQ…TRFDFHKEQF (189 aa)) are Cytoplasmic-facing.

Belongs to the RBOH (TC 5.B.1.3) family. As to quaternary structure, monomer and homodimer.

Its subcellular location is the membrane. Functionally, calcium-dependent NADPH oxidase that generates superoxide. The polypeptide is Probable respiratory burst oxidase homolog protein I (RBOHI) (Arabidopsis thaliana (Mouse-ear cress)).